Reading from the N-terminus, the 230-residue chain is Ion-translocating oxidoreductase complex subunit E (230 aa).

6 helical membrane-spanning segments follow: residues 18-38, 39-59, 63-83, 86-106, 125-145, and 182-202; these read ALVQ…ATNA, LGLG…ISAL, TPAE…VSAV, LINA…PLIV, ALSA…MFVL, and PFLL…MLAV.

This sequence belongs to the NqrDE/RnfAE family. As to quaternary structure, the complex is composed of six subunits: RnfA, RnfB, RnfC, RnfD, RnfE and RnfG.

It is found in the cell inner membrane. In terms of biological role, part of a membrane-bound complex that couples electron transfer with translocation of ions across the membrane. In Citrobacter koseri (strain ATCC BAA-895 / CDC 4225-83 / SGSC4696), this protein is Ion-translocating oxidoreductase complex subunit E.